The chain runs to 152 residues: UPF0178 protein YaiI (152 aa).

Belongs to the UPF0178 family.

In Escherichia coli O81 (strain ED1a), this protein is UPF0178 protein YaiI.